We begin with the raw amino-acid sequence, 545 residues long: Chaperonin GroEL (545 aa).

Residues 30-33 (TLGP), Lys-51, 87-91 (DGTTT), Gly-415, and Asp-495 each bind ATP.

It belongs to the chaperonin (HSP60) family. In terms of assembly, forms a cylinder of 14 subunits composed of two heptameric rings stacked back-to-back. Interacts with the co-chaperonin GroES.

It localises to the cytoplasm. It carries out the reaction ATP + H2O + a folded polypeptide = ADP + phosphate + an unfolded polypeptide.. Functionally, together with its co-chaperonin GroES, plays an essential role in assisting protein folding. The GroEL-GroES system forms a nano-cage that allows encapsulation of the non-native substrate proteins and provides a physical environment optimized to promote and accelerate protein folding. This Shewanella sp. (strain W3-18-1) protein is Chaperonin GroEL.